The chain runs to 247 residues: tRNA uridine(34) hydroxylase (247 aa).

The Rhodanese domain maps to 123 to 217; that stretch reads ITKQDVIVDT…YLEDTQNKNN (95 aa). Catalysis depends on C177, which acts as the Cysteine persulfide intermediate.

The protein belongs to the TrhO family.

It carries out the reaction uridine(34) in tRNA + AH2 + O2 = 5-hydroxyuridine(34) in tRNA + A + H2O. In terms of biological role, catalyzes oxygen-dependent 5-hydroxyuridine (ho5U) modification at position 34 in tRNAs. This chain is tRNA uridine(34) hydroxylase, found in Rickettsia bellii (strain RML369-C).